A 205-amino-acid chain; its full sequence is Small ribosomal subunit protein uS4 (205 aa).

Residues 94–157 enclose the S4 RNA-binding domain; the sequence is SRLDTVVYRM…KQIPLIQESV (64 aa).

It belongs to the universal ribosomal protein uS4 family. Part of the 30S ribosomal subunit. Contacts protein S5. The interaction surface between S4 and S5 is involved in control of translational fidelity.

In terms of biological role, one of the primary rRNA binding proteins, it binds directly to 16S rRNA where it nucleates assembly of the body of the 30S subunit. Its function is as follows. With S5 and S12 plays an important role in translational accuracy. This is Small ribosomal subunit protein uS4 from Rickettsia felis (strain ATCC VR-1525 / URRWXCal2) (Rickettsia azadi).